Consider the following 707-residue polypeptide: Ribosomal RNA large subunit methyltransferase K/L (707 aa).

Residues 43–154 form the THUMP domain; the sequence is QIYRCCLWSR…KDKAILGVDM (112 aa).

This sequence belongs to the methyltransferase superfamily. RlmKL family.

It is found in the cytoplasm. It carries out the reaction guanosine(2445) in 23S rRNA + S-adenosyl-L-methionine = N(2)-methylguanosine(2445) in 23S rRNA + S-adenosyl-L-homocysteine + H(+). The enzyme catalyses guanosine(2069) in 23S rRNA + S-adenosyl-L-methionine = N(2)-methylguanosine(2069) in 23S rRNA + S-adenosyl-L-homocysteine + H(+). Specifically methylates the guanine in position 2445 (m2G2445) and the guanine in position 2069 (m7G2069) of 23S rRNA. This is Ribosomal RNA large subunit methyltransferase K/L from Vibrio campbellii (strain ATCC BAA-1116).